The primary structure comprises 125 residues: Multifunctional methyltransferase subunit TRM112-like protein (125 aa).

The region spanning 2-119 (RLLTHNLLSS…SRGIPNMLLS (118 aa)) is the TRM112 domain. The residue at position 119 (Ser119) is a Phosphoserine.

This sequence belongs to the TRM112 family. As to quaternary structure, part of the heterodimeric BUD23-TRM112 methyltransferase complex; this heterodimerization is necessary for the metabolic stability and activity of the catalytic subunit BUD23. Part of the heterodimeric N6AMT1-TRM112 methyltransferase complex; this heterodimerization is necessary for S-adenosyl-L-methionine-binding to N6AMT1/HEMK2. Part of the heterodimeric ALKBH8-TRM112 methyltransferase complex. Part of the heterodimeric METTL5-TRM112 methyltransferase complex; this heterodimerization is necessary for the stability of the catalytic subunit METTL5. Part of the heterodimeric THUMPD3-TRM112 methyltransferase complex; this complex forms an active tRNA methyltransferase, where TRMT112 acts as an activator of the catalytic subunit THUMPD3. Part of the heterodimeric THUMPD2-TRM112 methyltransferase complex; this complex forms an active tRNA methyltransferase, where TRMT112 acts as an activator of the catalytic subunit THUMPD2. Part of the heterodimeric TRMT11-TRM112 methyltransferase complex; this complex forms an active tRNA methyltransferase, where TRMT112 acts as an activator of the catalytic subunit TRMT11.

Its subcellular location is the nucleus. The protein resides in the nucleoplasm. It is found in the cytoplasm. It localises to the perinuclear region. Acts as an activator of both rRNA/tRNA and protein methyltransferases. Together with methyltransferase BUD23, methylates the N(7) position of a guanine in 18S rRNA. The heterodimer with HEMK2/N6AMT1 catalyzes N5-methylation of ETF1 on 'Gln-185', using S-adenosyl L-methionine as methyl donor. The heterodimer with ALKBH8 catalyzes the methylation of 5-carboxymethyl uridine to 5-methylcarboxymethyl uridine at the wobble position of the anticodon loop in target tRNA species. Together with methyltransferase THUMPD3, catalyzes the formation of N(2)-methylguanosine at position 6 in a broad range of tRNA substrates and at position 7 of tRNA(Trp). Involved in the pre-rRNA processing steps leading to small-subunit rRNA production. Together with methyltransferase METTL5, specifically methylates the 6th position of adenine in position 1832 of 18S rRNA. This is Multifunctional methyltransferase subunit TRM112-like protein (TRMT112) from Bos taurus (Bovine).